Consider the following 223-residue polypeptide: Glutathione S-transferase A2 (223 aa).

A2 carries the post-translational modification N-acetylalanine. Residues 3 to 83 (GKPKLHYFNG…YIATKYNLYG (81 aa)) enclose the GST N-terminal domain. Residue K4 is modified to N6-succinyllysine. Residues Y9, R45, 54 to 55 (QV), and 67 to 68 (QT) contribute to the glutathione site. The 124-residue stretch at 85–208 (DMKERALIDM…QPGSQRKPPM (124 aa)) folds into the GST C-terminal domain.

Belongs to the GST superfamily. Alpha family. In terms of assembly, homodimer. In terms of tissue distribution, expressed in corpus luteum, adrenal gland, testis, liver, lung, thyroid and kidney.

The protein localises to the cytoplasm. The catalysed reaction is RX + glutathione = an S-substituted glutathione + a halide anion + H(+). In terms of biological role, conjugation of reduced glutathione to a wide number of exogenous and endogenous hydrophobic electrophiles. The chain is Glutathione S-transferase A2 (GSTA2) from Bos taurus (Bovine).